Here is a 119-residue protein sequence, read N- to C-terminus: Protein FATTY ACID EXPORT 6 (119 aa).

Transmembrane regions (helical) follow at residues 27 to 47 (SITS…AGYI), 57 to 77 (NSTI…LVMG), and 84 to 104 (GKIM…CFYV).

The protein belongs to the TMEM14 family.

It localises to the membrane. May be involved in free fatty acids export. This chain is Protein FATTY ACID EXPORT 6, found in Arabidopsis thaliana (Mouse-ear cress).